Here is a 247-residue protein sequence, read N- to C-terminus: tRNA uridine(34) hydroxylase (247 aa).

In terms of domain architecture, Rhodanese spans 124–218 (TKQDVIVIDT…YLEDTQNKNN (95 aa)). The Cysteine persulfide intermediate role is filled by C178.

It belongs to the TrhO family.

It catalyses the reaction uridine(34) in tRNA + AH2 + O2 = 5-hydroxyuridine(34) in tRNA + A + H2O. Functionally, catalyzes oxygen-dependent 5-hydroxyuridine (ho5U) modification at position 34 in tRNAs. The sequence is that of tRNA uridine(34) hydroxylase from Rickettsia massiliae (strain Mtu5).